Consider the following 41-residue polypeptide: Large ribosomal subunit protein bL36 (41 aa).

It belongs to the bacterial ribosomal protein bL36 family.

The polypeptide is Large ribosomal subunit protein bL36 (Neisseria gonorrhoeae (strain ATCC 700825 / FA 1090)).